We begin with the raw amino-acid sequence, 144 residues long: Large ribosomal subunit protein uL16 (144 aa).

The protein belongs to the universal ribosomal protein uL16 family. Part of the 50S ribosomal subunit.

Binds 23S rRNA and is also seen to make contacts with the A and possibly P site tRNAs. The protein is Large ribosomal subunit protein uL16 of Clostridium botulinum (strain Alaska E43 / Type E3).